A 61-amino-acid chain; its full sequence is U-stichotoxin-Hcr1b (61 aa).

The signal sequence occupies residues proline 1 to serine 19. Residues isoleucine 20–proline 31 constitute a propeptide that is removed on maturation. Disulfide bonds link cysteine 38–cysteine 49 and cysteine 41–cysteine 56.

It belongs to the Hau1a/HC18/HC19 family.

It localises to the secreted. Its subcellular location is the nematocyst. Toxin that is lethal to crab. Does not produce the typical symptoms associated with sodium channel toxins in crabs, suggesting that it likely does not act on sodium channels. This chain is U-stichotoxin-Hcr1b, found in Radianthus crispa (Leathery sea anemone).